Consider the following 229-residue polypeptide: Prolactin (229 aa).

An N-terminal signal peptide occupies residues 1 to 30 (MDSKVSSQKGSRLLLLLVVSNLLLCQGVVS). Residues cysteine 34 and cysteine 41 are joined by a disulfide bond. Phosphoserine occurs at positions 56, 64, and 120. Disulfide bonds link cysteine 88-cysteine 204 and cysteine 221-cysteine 229.

Belongs to the somatotropin/prolactin family. As to quaternary structure, interacts with PRLR.

The protein resides in the secreted. Its function is as follows. Prolactin acts primarily on the mammary gland by promoting lactation. The protein is Prolactin (PRL) of Cervus elaphus (Red deer).